A 1357-amino-acid chain; its full sequence is DNA-directed RNA polymerase subunit beta (1357 aa).

It belongs to the RNA polymerase beta chain family. The RNAP catalytic core consists of 2 alpha, 1 beta, 1 beta' and 1 omega subunit. When a sigma factor is associated with the core the holoenzyme is formed, which can initiate transcription.

The enzyme catalyses RNA(n) + a ribonucleoside 5'-triphosphate = RNA(n+1) + diphosphate. Its function is as follows. DNA-dependent RNA polymerase catalyzes the transcription of DNA into RNA using the four ribonucleoside triphosphates as substrates. In Pseudomonas putida (strain W619), this protein is DNA-directed RNA polymerase subunit beta.